An 846-amino-acid polypeptide reads, in one-letter code: Enhancer of polycomb-like protein 1 (846 aa).

Disordered regions lie at residues 169 to 204 (FNSK…KGDA), 391 to 466 (TSDE…APDA), 587 to 609 (EKKR…PKAM), 682 to 702 (AADA…PQPN), and 759 to 804 (QVQA…GVKQ). A compositionally biased stretch (basic and acidic residues) spans 180 to 203 (VKSDKEQGRGMRVKGKDREKEKGD). Polar residues predominate over residues 411–426 (PSLSGQTPLTSGQSSS). The span at 432 to 452 (TDKDREERAQRERYDAQRNAE) shows a compositional bias: basic and acidic residues. Positions 434–490 (KDREERAQRERYDAQRNAERSGILSGRSNAPDALKERLQALQQKTEEMLARKKEQDA) form a coiled coil. Residues 686 to 702 (KPPPAPIFQKPPAPQPN) show a composition bias toward pro residues. A compositionally biased stretch (low complexity) spans 759 to 773 (QVQAQGQGHPQAHLQ). Polar residues predominate over residues 774–796 (THPQGVSQPNGVNSPMPNGQQML).

This sequence belongs to the enhancer of polycomb family. In terms of assembly, component of the NuA4 histone acetyltransferase complex.

It is found in the nucleus. Component of the NuA4 histone acetyltransferase complex which is involved in transcriptional activation of selected genes principally by acetylation of nucleosomal histone H4 and H2A. The NuA4 complex is also involved in DNA repair. Involved in gene silencing by neighboring heterochromatin, blockage of the silencing spreading along the chromosome, and required for cell cycle progression through G2/M. This is Enhancer of polycomb-like protein 1 (EPL1) from Cryptococcus neoformans var. neoformans serotype D (strain B-3501A) (Filobasidiella neoformans).